A 227-amino-acid chain; its full sequence is GTP:AMP phosphotransferase AK3, mitochondrial (227 aa).

GTP contacts are provided by Gly17, Gly19, Lys20, Gly21, and Thr22. N6-succinyllysine is present on Lys20. Lys34 bears the N6-acetyllysine mark. Position 37 is a phosphoserine (Ser37). The tract at residues 37-66 (SSGDLLRDNMLRGTEIGVLAKAFIDQGKLI) is NMP. 2 residues coordinate AMP: Ser38 and Arg43. The residue at position 57 (Lys57) is an N6-succinyllysine. Position 64 (Lys64) interacts with AMP. N6-acetyllysine; alternate occurs at positions 64 and 80. An N6-succinyllysine; alternate mark is found at Lys64 and Lys80. Gly91, Arg94, and Gln98 together coordinate AMP. An LID region spans residues 127-164 (ARWIHPASGRVYNIEFNPPKTVGIDDLTGEPLIQREDD). GTP is bound by residues Arg128, Tyr138, Asn139, Arg161, and Arg172. An N6-acetyllysine; alternate mark is found at Lys174 and Lys189. N6-succinyllysine; alternate occurs at positions 174 and 189. GTP is bound at residue Thr201. An N6-acetyllysine modification is found at Lys203.

This sequence belongs to the adenylate kinase family. AK3 subfamily. Monomer. In terms of tissue distribution, highly expressed in heart, skeletal muscle and liver, moderately expressed in pancreas and kidney, and weakly expressed in placenta, brain and lung.

It is found in the mitochondrion matrix. It catalyses the reaction a ribonucleoside 5'-triphosphate + AMP = a ribonucleoside 5'-diphosphate + ADP. The enzyme catalyses GTP + AMP = GDP + ADP. It carries out the reaction ITP + AMP = IDP + ADP. Inhibited by ATP. In terms of biological role, mitochondrial adenylate kinase with a specific GTP:AMP phosphotransferase activity. Could also use ITP as phosphate donor. Its physiological function is to recycle GTP into GDP which is necessary for the TCA cycle in the mitochondrial matrix. This chain is GTP:AMP phosphotransferase AK3, mitochondrial, found in Homo sapiens (Human).